A 201-amino-acid polypeptide reads, in one-letter code: High mobility group protein homolog 068R (201 aa).

DNA-binding regions (HMG box) lie at residues 70-138 (PKRN…ELEK) and 143-201 (TPSK…KAAK).

It belongs to the IIV-6 401R family.

The protein localises to the host nucleus. This chain is High mobility group protein homolog 068R, found in Invertebrate iridescent virus 3 (IIV-3).